We begin with the raw amino-acid sequence, 354 residues long: tRNA-specific 2-thiouridylase MnmA (354 aa).

ATP is bound by residues 7-14 and Met-33; that span reads AMSGGVDS. Catalysis depends on Cys-94, which acts as the Nucleophile. Residues Cys-94 and Cys-192 are joined by a disulfide bond. ATP is bound at residue Gly-118. An interaction with tRNA region spans residues 141–143; that stretch reads KDQ. The Cysteine persulfide intermediate role is filled by Cys-192. An interaction with tRNA region spans residues 296–297; it reads RY.

It belongs to the MnmA/TRMU family.

It is found in the cytoplasm. The enzyme catalyses S-sulfanyl-L-cysteinyl-[protein] + uridine(34) in tRNA + AH2 + ATP = 2-thiouridine(34) in tRNA + L-cysteinyl-[protein] + A + AMP + diphosphate + H(+). Functionally, catalyzes the 2-thiolation of uridine at the wobble position (U34) of tRNA, leading to the formation of s(2)U34. The polypeptide is tRNA-specific 2-thiouridylase MnmA (Trichlorobacter lovleyi (strain ATCC BAA-1151 / DSM 17278 / SZ) (Geobacter lovleyi)).